The following is a 411-amino-acid chain: Lysosome-associated membrane glycoprotein 2 (411 aa).

The first 26 residues, 1–26 (MRLLSPVTGSKLVLLFLFLGAVRSDA), serve as a signal peptide directing secretion. Residues 27-188 (LKLNLTDSKG…SKHEQVCKED (162 aa)) are first lumenal domain. Over 27–376 (LKLNLTDSKG…QDCSADEDNF (350 aa)) the chain is Lumenal. The cysteines at positions 38 and 75 are disulfide-linked. Residues Asn46, Asn57, Asn71, Asn97, Asn109, Asn117, Asn175, Asn223, Asn230, Asn243, Asn261, Asn276, Asn308, Asn318, and Asn357 are each glycosylated (N-linked (GlcNAc...) asparagine). A disulfide bridge links Cys149 with Cys185. The interval 189–229 (KTATTVAPIIHTTVPSPTTTLTPTSIPVPTPTVGNYTISNG) is hinge. Positions 230 to 376 (NATCLLATMG…QDCSADEDNF (147 aa)) are second lumenal domain. A disulfide bridge connects residues Cys233 and Cys266. A disulfide bond links Cys332 and Cys369. A helical transmembrane segment spans residues 377–400 (LVPIAVGAALGGVLILVLLAYFIG). The Cytoplasmic portion of the chain corresponds to 401–411 (LKRHHTGYEQF). Positions 402–405 (KRHH) are important for binding and subsequent lysosomal degradation of target proteins.

It belongs to the LAMP family. Monomer. Forms large homooligomers. Interacts (via its cytoplasmic region) with HSPA8; HSPA8 mediates recruitment of proteins with a KFERQ motif to the surface of the lysosome for chaperone-mediated autophagy. Interacts with HSP90 in the lysosome lumen; this enhances LAMP2 stability. Interacts with MLLT11. Interacts with ABCB9. Interacts with FURIN. Interacts with CT55; this interaction may be important for LAMP2 protein stability. Interacts with TMEM175; inhibiting the proton channel activity of TMEM175. Forms a ternary complex with RAB7A and RUFY4 (via RUN domain); the interaction with RAB7A is mediated by RUFY4 (via RUN and coiled coil domains). In terms of processing, extensively N-glycosylated. Contains a minor proportion of O-linked glycans. Contains sialylated glycans. In terms of tissue distribution, detected in liver, kidney, spleen and macrophages (at protein level).

Its subcellular location is the lysosome membrane. The protein resides in the endosome membrane. It is found in the cell membrane. The protein localises to the cytoplasmic vesicle. It localises to the autophagosome membrane. Lysosomal membrane glycoprotein which plays an important role in lysosome biogenesis, lysosomal pH regulation and autophagy. Acts as an important regulator of lysosomal lumen pH regulation by acting as a direct inhibitor of the proton channel TMEM175, facilitating lysosomal acidification for optimal hydrolase activity. Plays an important role in chaperone-mediated autophagy, a process that mediates lysosomal degradation of proteins in response to various stresses and as part of the normal turnover of proteins with a long biological half-live. Functions by binding target proteins, such as GAPDH, NLRP3 and MLLT11, and targeting them for lysosomal degradation. In the chaperone-mediated autophagy, acts downstream of chaperones, such as HSPA8/HSC70, which recognize and bind substrate proteins and mediate their recruitment to lysosomes, where target proteins bind LAMP2. Plays a role in lysosomal protein degradation in response to starvation. Required for the fusion of autophagosomes with lysosomes during autophagy. Cells that lack LAMP2 express normal levels of VAMP8, but fail to accumulate STX17 on autophagosomes, which is the most likely explanation for the lack of fusion between autophagosomes and lysosomes. Required for normal degradation of the contents of autophagosomes. Required for efficient MHC class II-mediated presentation of exogenous antigens via its function in lysosomal protein degradation; antigenic peptides generated by proteases in the endosomal/lysosomal compartment are captured by nascent MHC II subunits. Is not required for efficient MHC class II-mediated presentation of endogenous antigens. The sequence is that of Lysosome-associated membrane glycoprotein 2 (Lamp2) from Rattus norvegicus (Rat).